We begin with the raw amino-acid sequence, 355 residues long: Uroporphyrinogen decarboxylase (355 aa).

Residues 38–42, Asp-87, Tyr-162, Ser-217, and His-331 each bind substrate; that span reads RQAGR.

This sequence belongs to the uroporphyrinogen decarboxylase family. As to quaternary structure, homodimer.

Its subcellular location is the cytoplasm. The enzyme catalyses uroporphyrinogen III + 4 H(+) = coproporphyrinogen III + 4 CO2. The protein operates within porphyrin-containing compound metabolism; protoporphyrin-IX biosynthesis; coproporphyrinogen-III from 5-aminolevulinate: step 4/4. Its function is as follows. Catalyzes the decarboxylation of four acetate groups of uroporphyrinogen-III to yield coproporphyrinogen-III. The polypeptide is Uroporphyrinogen decarboxylase (Streptomyces coelicolor (strain ATCC BAA-471 / A3(2) / M145)).